Reading from the N-terminus, the 104-residue chain is L-rhamnose mutarotase (104 aa).

Position 18 (tyrosine 18) interacts with substrate. Histidine 22 (proton donor) is an active-site residue. Substrate contacts are provided by residues tyrosine 41 and 76-77; that span reads WW.

Belongs to the rhamnose mutarotase family. As to quaternary structure, homodimer.

It localises to the cytoplasm. It carries out the reaction alpha-L-rhamnose = beta-L-rhamnose. It functions in the pathway carbohydrate metabolism; L-rhamnose metabolism. Functionally, involved in the anomeric conversion of L-rhamnose. This is L-rhamnose mutarotase from Shigella sonnei (strain Ss046).